The following is a 450-amino-acid chain: N-lysine methyltransferase SETD6 (450 aa).

The segment covering methionine 1–valine 10 has biased composition (basic residues). The disordered stretch occupies residues methionine 1–proline 20. The SET domain occupies proline 39–glycine 263. Lysine 40 is modified (N6-methylated lysine; by autocatalysis). Position 50–52 (alanine 50–tyrosine 52) interacts with S-adenosyl-L-methionine. Substrate is bound at residue tryptophan 99. Lysine 156 carries the N6-methylated lysine; by autocatalysis modification. Tyrosine 200 provides a ligand contact to S-adenosyl-L-methionine. Serine 201 and glutamine 203 together coordinate substrate. Residues asparagine 228–histidine 229 and tyrosine 274 each bind S-adenosyl-L-methionine. An N6-methylated lysine; by autocatalysis modification is found at lysine 349.

It belongs to the class V-like SAM-binding methyltransferase superfamily. Histone-lysine methyltransferase family. SETD6 subfamily. Monomer, homodimer and homotrimer; these structures are stabilized in the presence of S-adenosyl-L-methionine (SAM). In terms of processing, automethylated.

It localises to the nucleus. It catalyses the reaction L-lysyl-[protein] + S-adenosyl-L-methionine = N(6)-methyl-L-lysyl-[protein] + S-adenosyl-L-homocysteine + H(+). The catalysed reaction is L-lysyl(8)-[histone H2AZ] + S-adenosyl-L-methionine = N(6)-methyl-L-lysyl(8)-[histone H2AZ] + S-adenosyl-L-homocysteine + H(+). Its function is as follows. Protein-lysine N-methyltransferase. Monomethylates 'Lys-310' of the RELA subunit of NF-kappa-B complex, leading to down-regulation of NF-kappa-B transcription factor activity. Monomethylates 'Lys-8' of H2AZ (H2AZK8me1). Required for the maintenance of embryonic stem cell self-renewal. Methylates PAK4. This chain is N-lysine methyltransferase SETD6 (SETD6), found in Bos taurus (Bovine).